The chain runs to 180 residues: Oligoribonuclease (180 aa).

The region spanning 7–170 is the Exonuclease domain; it reads LIWIDLEMTG…DDIRESIAEL (164 aa). Y128 is a catalytic residue.

The protein belongs to the oligoribonuclease family.

Its subcellular location is the cytoplasm. 3'-to-5' exoribonuclease specific for small oligoribonucleotides. The sequence is that of Oligoribonuclease from Pseudomonas entomophila (strain L48).